Here is an 81-residue protein sequence, read N- to C-terminus: MATKKNNFEEQLNELQEIVNKLESGNVPLEDALNEFQAGVKLSRELEKKLNDAEQTVAKLVDKDGNEKTLDPQNASAPEEE.

The disordered stretch occupies residues 59-81 (KLVDKDGNEKTLDPQNASAPEEE). A compositionally biased stretch (basic and acidic residues) spans 60–70 (LVDKDGNEKTL). Polar residues predominate over residues 71-81 (DPQNASAPEEE).

The protein belongs to the XseB family. As to quaternary structure, heterooligomer composed of large and small subunits.

The protein localises to the cytoplasm. It catalyses the reaction Exonucleolytic cleavage in either 5'- to 3'- or 3'- to 5'-direction to yield nucleoside 5'-phosphates.. In terms of biological role, bidirectionally degrades single-stranded DNA into large acid-insoluble oligonucleotides, which are then degraded further into small acid-soluble oligonucleotides. The polypeptide is Exodeoxyribonuclease 7 small subunit (Lactobacillus gasseri (strain ATCC 33323 / DSM 20243 / BCRC 14619 / CIP 102991 / JCM 1131 / KCTC 3163 / NCIMB 11718 / NCTC 13722 / AM63)).